The sequence spans 984 residues: Putative formate dehydrogenase SH0748 (984 aa).

A 2Fe-2S ferredoxin-type domain is found at 3–79; sequence EHLIVTLDGT…PMTVNTQNND (77 aa). 4 residues coordinate [2Fe-2S] cluster: C37, C48, C51, and C63. The region spanning 79–119 is the 4Fe-4S His(Cys)3-ligated-type domain; it reads DVKASQKEALDRILEKHMLYCTVCDYNNGDCEIHNAMDAWG. Positions 95, 99, 102, 109, 147, 150, 153, 157, 190, 193, 196, 200, 264, 267, 271, and 299 each coordinate [4Fe-4S] cluster. 4Fe-4S ferredoxin-type domains lie at 138–165 and 181–211; these read PFYR…VNET and NDVP…VNME. Residues 252-984 are formate dehydrogenase; it reads MRKERIKKTK…YVFPGNVVDK (733 aa). A 4Fe-4S Mo/W bis-MGD-type domain is found at 257–313; that stretch reads IKKTKTVCTYCGVGCSFDVWTKDREVLKVQPSHDSPANKIATCVKGKFSWGHINSDQ.

In the C-terminal section; belongs to the prokaryotic molybdopterin-containing oxidoreductase family. It depends on [2Fe-2S] cluster as a cofactor. [4Fe-4S] cluster is required as a cofactor. Mo-bis(molybdopterin guanine dinucleotide) serves as cofactor.

The catalysed reaction is formate + NAD(+) = CO2 + NADH. The chain is Putative formate dehydrogenase SH0748 from Staphylococcus haemolyticus (strain JCSC1435).